The primary structure comprises 455 residues: Bifunctional protein GlmU (455 aa).

Residues 1–227 (MDSLSIVILA…SWEAAGVNNK (227 aa)) form a pyrophosphorylase region. Residues 9 to 12 (LAAG), lysine 23, glutamine 74, 79 to 80 (GT), 101 to 103 (YGD), glycine 137, glutamate 152, asparagine 167, and asparagine 225 contribute to the UDP-N-acetyl-alpha-D-glucosamine site. Position 103 (aspartate 103) interacts with Mg(2+). Residue asparagine 225 participates in Mg(2+) binding. The interval 228-248 (VQLAELERILQANQARALLEA) is linker. The tract at residues 249 to 455 (GVTLADPARI…GWKRPQKKSG (207 aa)) is N-acetyltransferase. The UDP-N-acetyl-alpha-D-glucosamine site is built by arginine 331 and lysine 349. The active-site Proton acceptor is the histidine 361. UDP-N-acetyl-alpha-D-glucosamine contacts are provided by tyrosine 364 and asparagine 375. Residues alanine 378, 384 to 385 (NY), serine 403, alanine 421, and arginine 438 each bind acetyl-CoA.

In the N-terminal section; belongs to the N-acetylglucosamine-1-phosphate uridyltransferase family. This sequence in the C-terminal section; belongs to the transferase hexapeptide repeat family. In terms of assembly, homotrimer. Requires Mg(2+) as cofactor.

The protein localises to the cytoplasm. It carries out the reaction alpha-D-glucosamine 1-phosphate + acetyl-CoA = N-acetyl-alpha-D-glucosamine 1-phosphate + CoA + H(+). The catalysed reaction is N-acetyl-alpha-D-glucosamine 1-phosphate + UTP + H(+) = UDP-N-acetyl-alpha-D-glucosamine + diphosphate. Its pathway is nucleotide-sugar biosynthesis; UDP-N-acetyl-alpha-D-glucosamine biosynthesis; N-acetyl-alpha-D-glucosamine 1-phosphate from alpha-D-glucosamine 6-phosphate (route II): step 2/2. It participates in nucleotide-sugar biosynthesis; UDP-N-acetyl-alpha-D-glucosamine biosynthesis; UDP-N-acetyl-alpha-D-glucosamine from N-acetyl-alpha-D-glucosamine 1-phosphate: step 1/1. The protein operates within bacterial outer membrane biogenesis; LPS lipid A biosynthesis. Catalyzes the last two sequential reactions in the de novo biosynthetic pathway for UDP-N-acetylglucosamine (UDP-GlcNAc). The C-terminal domain catalyzes the transfer of acetyl group from acetyl coenzyme A to glucosamine-1-phosphate (GlcN-1-P) to produce N-acetylglucosamine-1-phosphate (GlcNAc-1-P), which is converted into UDP-GlcNAc by the transfer of uridine 5-monophosphate (from uridine 5-triphosphate), a reaction catalyzed by the N-terminal domain. This chain is Bifunctional protein GlmU, found in Chromobacterium violaceum (strain ATCC 12472 / DSM 30191 / JCM 1249 / CCUG 213 / NBRC 12614 / NCIMB 9131 / NCTC 9757 / MK).